A 215-amino-acid chain; its full sequence is Pyrrolidone-carboxylate peptidase (215 aa).

Catalysis depends on residues Glu-80, Cys-143, and His-167.

It belongs to the peptidase C15 family. In terms of assembly, homotetramer.

It localises to the cytoplasm. It carries out the reaction Release of an N-terminal pyroglutamyl group from a polypeptide, the second amino acid generally not being Pro.. Functionally, removes 5-oxoproline from various penultimate amino acid residues except L-proline. This chain is Pyrrolidone-carboxylate peptidase, found in Bacillus cereus (strain 03BB102).